A 194-amino-acid chain; its full sequence is Erythropoietin (194 aa).

An N-terminal signal peptide occupies residues 1–27 (MGARDCTPLLLLLLSFLLFPLGLPVLG). Cystine bridges form between Cys34–Cys189 and Cys56–Cys60. Asn51 carries an N-linked (GlcNAc...) asparagine glycan. 2 N-linked (GlcNAc...) asparagine glycosylation sites follow: Asn65 and Asn110.

Belongs to the EPO/TPO family. In terms of tissue distribution, produced by kidney or liver of adult mammals and by liver of fetal or neonatal mammals.

It is found in the secreted. Hormone involved in the regulation of erythrocyte proliferation and differentiation and the maintenance of a physiological level of circulating erythrocyte mass. Binds to EPOR leading to EPOR dimerization and JAK2 activation thereby activating specific downstream effectors, including STAT1 and STAT3. This chain is Erythropoietin (EPO), found in Ovis aries (Sheep).